The primary structure comprises 262 residues: ATP synthase subunit a (262 aa).

5 helical membrane passes run alanine 24 to phenylalanine 44, isoleucine 85 to valine 105, aspartate 129 to valine 149, leucine 194 to alanine 214, and leucine 228 to leucine 248.

The protein belongs to the ATPase A chain family. As to quaternary structure, F-type ATPases have 2 components, CF(1) - the catalytic core - and CF(0) - the membrane proton channel. CF(1) has five subunits: alpha(3), beta(3), gamma(1), delta(1), epsilon(1). CF(0) has three main subunits: a(1), b(2) and c(9-12). The alpha and beta chains form an alternating ring which encloses part of the gamma chain. CF(1) is attached to CF(0) by a central stalk formed by the gamma and epsilon chains, while a peripheral stalk is formed by the delta and b chains.

Its subcellular location is the cell inner membrane. In terms of biological role, key component of the proton channel; it plays a direct role in the translocation of protons across the membrane. The chain is ATP synthase subunit a from Haemophilus ducreyi (strain 35000HP / ATCC 700724).